Here is a 177-residue protein sequence, read N- to C-terminus: Large ribosomal subunit protein uL6 (177 aa).

The protein belongs to the universal ribosomal protein uL6 family. As to quaternary structure, part of the 50S ribosomal subunit.

Functionally, this protein binds to the 23S rRNA, and is important in its secondary structure. It is located near the subunit interface in the base of the L7/L12 stalk, and near the tRNA binding site of the peptidyltransferase center. This Pseudomonas syringae pv. syringae (strain B728a) protein is Large ribosomal subunit protein uL6.